Reading from the N-terminus, the 353-residue chain is Anthranilate phosphoribosyltransferase (353 aa).

Residues Gly79, 82 to 83 (GD), Thr87, 89 to 92 (NIST), 107 to 115 (KHGNHSFTS), and Ser119 contribute to the 5-phospho-alpha-D-ribose 1-diphosphate site. Gly79 contributes to the anthranilate binding site. Residue Ser91 coordinates Mg(2+). Asn110 provides a ligand contact to anthranilate. Arg165 contacts anthranilate. Positions 223 and 224 each coordinate Mg(2+).

Belongs to the anthranilate phosphoribosyltransferase family. Homodimer. It depends on Mg(2+) as a cofactor.

The enzyme catalyses N-(5-phospho-beta-D-ribosyl)anthranilate + diphosphate = 5-phospho-alpha-D-ribose 1-diphosphate + anthranilate. It participates in amino-acid biosynthesis; L-tryptophan biosynthesis; L-tryptophan from chorismate: step 2/5. Functionally, catalyzes the transfer of the phosphoribosyl group of 5-phosphorylribose-1-pyrophosphate (PRPP) to anthranilate to yield N-(5'-phosphoribosyl)-anthranilate (PRA). This chain is Anthranilate phosphoribosyltransferase, found in Methanococcoides burtonii (strain DSM 6242 / NBRC 107633 / OCM 468 / ACE-M).